The chain runs to 132 residues: AP-2 complex subunit sigma (132 aa).

This sequence belongs to the adaptor complexes small subunit family. As to quaternary structure, adaptor protein complex 2 (AP-2) is a heterotetramer composed of two large adaptins (alpha-type and beta-type subunits), a medium adaptin (mu-type subunit AP50) and a small adaptin (sigma-type subunit AP17). In terms of tissue distribution, widely expressed in the embryo, endosperm, leaf and root.

The protein localises to the cell membrane. The protein resides in the membrane. It localises to the coated pit. Component of the adaptor complexes which link clathrin to receptors in coated vesicles. Clathrin-associated protein complexes are believed to interact with the cytoplasmic tails of membrane proteins, leading to their selection and concentration. AP2S1/AP17 is a subunit of the plasma membrane adaptor. The complex binds polyphosphoinositides. The sequence is that of AP-2 complex subunit sigma (AP-17) from Zea mays (Maize).